Reading from the N-terminus, the 180-residue chain is Formate hydrogenlyase subunit 6 (180 aa).

2 4Fe-4S ferredoxin-type domains span residues glycine 31–aspartate 60 and leucine 66–glutamate 95. 8 residues coordinate [4Fe-4S] cluster: cysteine 40, cysteine 43, cysteine 46, cysteine 50, cysteine 75, cysteine 78, cysteine 81, and cysteine 85.

As to quaternary structure, FHL comprises of a formate dehydrogenase, unidentified electron carriers and a hydrogenase (isoenzyme 3). In this non-energy conserving pathway, molecular hydrogen and carbodioxide are released from formate.

Its function is as follows. Probable electron transfer protein for hydrogenase 3. The polypeptide is Formate hydrogenlyase subunit 6 (hycF) (Escherichia coli (strain K12)).